Here is a 63-residue protein sequence, read N- to C-terminus: Parvalbumin alpha (63 aa).

EF-hand domains lie at Ile28–Lys38 and Val39–Glu63. Glu29, Glu32, Asp45, Asp47, Asp49, Lys51, and Glu56 together coordinate Ca(2+).

As to expression, detected in muscle and cutaneous mucus. In the skin, detected in cells in the basal region of the glandular epithelium of the dermal mucus glands (at protein level).

It localises to the cytoplasm. The protein resides in the secreted. In muscle, parvalbumin is thought to be involved in relaxation after contraction. It binds two calcium ions. The chain is Parvalbumin alpha from Rana temporaria (European common frog).